The sequence spans 149 residues: Lipoprotein signal peptidase (149 aa).

2 consecutive transmembrane segments (helical) span residues 53-73 (MPGKSWLFFISALLVIMALVI) and 89-109 (GLIAGGALGNLIDRYFYGFVI). Residues D110 and D124 contribute to the active site. Residues 119–139 (VFNLADSAIVCGGILLLILVL) traverse the membrane as a helical segment.

This sequence belongs to the peptidase A8 family.

The protein resides in the cell membrane. It carries out the reaction Release of signal peptides from bacterial membrane prolipoproteins. Hydrolyzes -Xaa-Yaa-Zaa-|-(S,diacylglyceryl)Cys-, in which Xaa is hydrophobic (preferably Leu), and Yaa (Ala or Ser) and Zaa (Gly or Ala) have small, neutral side chains.. It participates in protein modification; lipoprotein biosynthesis (signal peptide cleavage). In terms of biological role, this protein specifically catalyzes the removal of signal peptides from prolipoproteins. The protein is Lipoprotein signal peptidase of Syntrophomonas wolfei subsp. wolfei (strain DSM 2245B / Goettingen).